Reading from the N-terminus, the 462-residue chain is Putative E3 ubiquitin-protein ligase XBAT35 (462 aa).

ANK repeat units follow at residues serine 6 to tryptophan 35, glutamate 39 to alanine 69, and histidine 75 to valine 104. Disordered regions lie at residues histidine 277–serine 341 and serine 356–arginine 402. The span at serine 304–histidine 317 shows a compositional bias: polar residues. The segment covering serine 319–serine 341 has biased composition (low complexity). The segment at cysteine 411–arginine 450 adopts an RING-type zinc-finger fold.

It catalyses the reaction S-ubiquitinyl-[E2 ubiquitin-conjugating enzyme]-L-cysteine + [acceptor protein]-L-lysine = [E2 ubiquitin-conjugating enzyme]-L-cysteine + N(6)-ubiquitinyl-[acceptor protein]-L-lysine.. The protein operates within protein modification; protein ubiquitination. In terms of biological role, no E3 ubiquitin-protein ligase activity observed when associated with the E2 enzyme UBC8 in vitro. The sequence is that of Putative E3 ubiquitin-protein ligase XBAT35 (XBAT35) from Arabidopsis thaliana (Mouse-ear cress).